Reading from the N-terminus, the 515-residue chain is ATP synthase subunit alpha (515 aa).

Glycine 171 to threonine 178 serves as a coordination point for ATP.

It belongs to the ATPase alpha/beta chains family. F-type ATPases have 2 components, CF(1) - the catalytic core - and CF(0) - the membrane proton channel. CF(1) has five subunits: alpha(3), beta(3), gamma(1), delta(1), epsilon(1). CF(0) has three main subunits: a(1), b(2) and c(9-12). The alpha and beta chains form an alternating ring which encloses part of the gamma chain. CF(1) is attached to CF(0) by a central stalk formed by the gamma and epsilon chains, while a peripheral stalk is formed by the delta and b chains.

The protein localises to the cell inner membrane. The enzyme catalyses ATP + H2O + 4 H(+)(in) = ADP + phosphate + 5 H(+)(out). Produces ATP from ADP in the presence of a proton gradient across the membrane. The alpha chain is a regulatory subunit. The polypeptide is ATP synthase subunit alpha (Stenotrophomonas maltophilia (strain R551-3)).